Consider the following 162-residue polypeptide: NADH-quinone oxidoreductase subunit I (162 aa).

4Fe-4S ferredoxin-type domains follow at residues 54–83 and 93–122; these read RRYENGEERCIACKLCEAVCPALAITIESE and TRYDIDLTKCIFCGFCEESCPVDSIVETQI. 8 residues coordinate [4Fe-4S] cluster: Cys-63, Cys-66, Cys-69, Cys-73, Cys-102, Cys-105, Cys-108, and Cys-112.

The protein belongs to the complex I 23 kDa subunit family. NDH-1 is composed of 14 different subunits. Subunits NuoA, H, J, K, L, M, N constitute the membrane sector of the complex. Requires [4Fe-4S] cluster as cofactor.

It is found in the cell inner membrane. The enzyme catalyses a quinone + NADH + 5 H(+)(in) = a quinol + NAD(+) + 4 H(+)(out). In terms of biological role, NDH-1 shuttles electrons from NADH, via FMN and iron-sulfur (Fe-S) centers, to quinones in the respiratory chain. The immediate electron acceptor for the enzyme in this species is believed to be ubiquinone. Couples the redox reaction to proton translocation (for every two electrons transferred, four hydrogen ions are translocated across the cytoplasmic membrane), and thus conserves the redox energy in a proton gradient. The polypeptide is NADH-quinone oxidoreductase subunit I (Burkholderia ambifaria (strain MC40-6)).